The primary structure comprises 343 residues: Protein RecA (343 aa).

An ATP-binding site is contributed by 64–71 (GPESSGKT).

It belongs to the RecA family.

Its subcellular location is the cytoplasm. In terms of biological role, can catalyze the hydrolysis of ATP in the presence of single-stranded DNA, the ATP-dependent uptake of single-stranded DNA by duplex DNA, and the ATP-dependent hybridization of homologous single-stranded DNAs. It interacts with LexA causing its activation and leading to its autocatalytic cleavage. This chain is Protein RecA, found in Bacillus cereus (strain B4264).